The primary structure comprises 372 residues: Glutamate 5-kinase (372 aa).

ATP is bound at residue lysine 14. Residues serine 54, aspartate 141, and asparagine 153 each contribute to the substrate site. Residue 173-174 (TD) coordinates ATP. One can recognise a PUA domain in the interval 280-358 (RGHVVIDDGA…GEIESVLGYM (79 aa)).

The protein belongs to the glutamate 5-kinase family.

The protein localises to the cytoplasm. It catalyses the reaction L-glutamate + ATP = L-glutamyl 5-phosphate + ADP. It participates in amino-acid biosynthesis; L-proline biosynthesis; L-glutamate 5-semialdehyde from L-glutamate: step 1/2. Functionally, catalyzes the transfer of a phosphate group to glutamate to form L-glutamate 5-phosphate. The protein is Glutamate 5-kinase of Paraburkholderia phymatum (strain DSM 17167 / CIP 108236 / LMG 21445 / STM815) (Burkholderia phymatum).